The primary structure comprises 327 residues: Small ribosomal subunit protein uS4m (327 aa).

Residues 96-154 (SRLDMSIHRALFASSALQARQLVLHGKVHVNGKPERRAYRQLLPGDLVTVDQKSVMNCV) enclose the S4 RNA-binding domain. The span at 156–173 (ASSNNTPSIQDGKQTEQV) shows a compositional bias: polar residues. The segment at 156–199 (ASSNNTPSIQDGKQTEQVSSKDGENEKKKDNDDDLFEQTSNGKL) is disordered. Positions 174-186 (SSKDGENEKKKDN) are enriched in basic and acidic residues.

Belongs to the universal ribosomal protein uS4 family. Component of the mitochondrial small ribosomal subunit (mt-SSU). Mature yeast 74S mitochondrial ribosomes consist of a small (37S) and a large (54S) subunit. The 37S small subunit contains a 15S ribosomal RNA (15S mt-rRNA) and at least 32 different proteins. The 54S large subunit contains a 21S rRNA (21S mt-rRNA) and at least 45 different proteins. uS3m, uS4m and uS5m form the narrow entry site of the mRNA channel.

The protein resides in the mitochondrion. Functionally, component of the mitochondrial ribosome (mitoribosome), a dedicated translation machinery responsible for the synthesis of mitochondrial genome-encoded proteins, including at least some of the essential transmembrane subunits of the mitochondrial respiratory chain. The mitoribosomes are attached to the mitochondrial inner membrane and translation products are cotranslationally integrated into the membrane. The protein is Small ribosomal subunit protein uS4m (nam9) of Schizosaccharomyces pombe (strain 972 / ATCC 24843) (Fission yeast).